Here is a 336-residue protein sequence, read N- to C-terminus: Protein phosphatase 1 regulatory subunit pprA (336 aa).

Residues 1–10 (MSEQNTIINS) show a composition bias toward low complexity. Residues 1–24 (MSEQNTIINSEEIKENEKIESETE) form a disordered region. Basic and acidic residues predominate over residues 11–21 (EEIKENEKIES). LRR repeat units lie at residues 26–47 (PITY…YNIP), 49–70 (TLLD…NHLK), 71–92 (NLKK…DQLK), 93–114 (ELES…KDFQ), 115–136 (SLTY…SIKD), 139–160 (KIKE…QELV), 161–182 (PIKN…ENLV), 183–204 (NIET…NHLS), 205–225 (HLRI…KGLV), 229–250 (CLEE…QSLK), 251–272 (QLRT…NELP), and 273–294 (DLDE…EQQV). The 31-residue stretch at 306-336 (NPVATHVQYRRMFINMFPQLKQLDATMVKRN) folds into the LRRCT domain.

It belongs to the SDS22 family.

The protein localises to the nucleus. Its function is as follows. Regulatory subunit of protein phosphatase 1. In Dictyostelium discoideum (Social amoeba), this protein is Protein phosphatase 1 regulatory subunit pprA (pprA).